The following is a 498-amino-acid chain: Probable malate:quinone oxidoreductase 2 (498 aa).

This sequence belongs to the MQO family. Requires FAD as cofactor.

The enzyme catalyses (S)-malate + a quinone = a quinol + oxaloacetate. It participates in carbohydrate metabolism; tricarboxylic acid cycle; oxaloacetate from (S)-malate (quinone route): step 1/1. The sequence is that of Probable malate:quinone oxidoreductase 2 from Staphylococcus epidermidis (strain ATCC 35984 / DSM 28319 / BCRC 17069 / CCUG 31568 / BM 3577 / RP62A).